The following is a 398-amino-acid chain: Dual specificity protein phosphatase 4 (398 aa).

N-acetylvaline is present on V2. The region spanning 45–163 is the Rhodanese domain; the sequence is SGGKCLLLDC…FSSEYPEFCS (119 aa). In terms of domain architecture, Tyrosine-protein phosphatase spans 199-340; the sequence is GPVEILPFLY…LLQFESQVLT (142 aa). Residue C284 is the Phosphocysteine intermediate of the active site. A phosphoserine; by MAPK mark is found at S390 and S395.

This sequence belongs to the protein-tyrosine phosphatase family. Non-receptor class dual specificity subfamily. As to quaternary structure, hollow spherical complex composed of 24 subunits with pseudooctahedral symmetry, has a tetramer as the basic unit. Post-translationally, phosphorylation in the C-terminus by ERK1/2 inhibits proteasomal degradation and stabilizes the protein.

It is found in the nucleus. The enzyme catalyses O-phospho-L-tyrosyl-[protein] + H2O = L-tyrosyl-[protein] + phosphate. It carries out the reaction O-phospho-L-seryl-[protein] + H2O = L-seryl-[protein] + phosphate. It catalyses the reaction O-phospho-L-threonyl-[protein] + H2O = L-threonyl-[protein] + phosphate. In terms of biological role, regulates mitogenic signal transduction by dephosphorylating both Thr and Tyr residues on MAP kinases ERK1 and ERK2. The protein is Dual specificity protein phosphatase 4 (Dusp4) of Mus musculus (Mouse).